The chain runs to 71 residues: SPbeta prophage-derived uncharacterized protein YorP (71 aa).

The chain is SPbeta prophage-derived uncharacterized protein YorP (yorP) from Bacillus subtilis (strain 168).